Reading from the N-terminus, the 836-residue chain is MDSDAKSRNDAPIIKLSIDLIKTYKHINQVYYTAKAKKKQQAQQQAQQQAQQLQQQAQQQQHQLQQQQQLLQQQQQQQQQQQQQQQQQQQQQQQQQQQQQQYQQQHNNNINNNNNNSNINNKNNNNNNTNFNTSNNNNNTNNNSNNNSNNNNSNNNNNNNNINNINNININNKNNNNNNNNNNNINNINNNNNKNNNNNNNNNNNDDNNNINNNNSNNNNNNNNNNNNNNNNNNNNNNNNNSNNNNNNNNLNNNNSNNNYNNNTTTTSSSNNNNNNKQSKYNDGYDDENADYIVRIGEVFVDRFEIISSLGKGSFGQVVKAFDSVLKEYVAIKIIKNKVPFYNQALIEIRLLELMNNKDPEDQYKIIKLKHHFKFRNHLCIVTELLSYNLYDLLRNTHFHGVSLNLIKKFAHQILTALFFMSTPEVDVIHCDLKPENILLRNPKRSAIKIIDFGSSCHSNERMYKYIQSRFYRSPEILLELEYSFSIDMWSLGCILVEMHVGEPLFSGQNEQDQLTKIIEVLDLPPSHMIDSSPKAKKFFTKDPINSTYQLKKNEKLKTNVEFCKKKLSEIIGVETGGPQSRRKNEPGHALVDYLKFLDLIEKMLIYDPQKRITPLEALQHSFFLTDETSQPPQQQSQQQSQQQSQQQSQQQSQQQSQQRRQSNTDNNFSNNNPINNYNSPSSKSPHQQLQQQQQQQQQQQQQQQQQQQQQQQQQQQTYSPTTQQSNHKLVDQMKKASMKDKSPHSNISNILNDSEEDNSKVHINSNTSDNMQARINFQVENQSNIYNNNNNNNNNNNNNNNNNNSNNYNNSNELSPNPPILPNLKDLLPHNNNNI.

The segment covering 99-278 (QQQYQQQHNN…SSNNNNNNKQ (180 aa)) has biased composition (low complexity). The tract at residues 99-286 (QQQYQQQHNN…KQSKYNDGYD (188 aa)) is disordered. Residues 304 to 624 (FEIISSLGKG…PLEALQHSFF (321 aa)) form the Protein kinase domain. Residues 310–318 (LGKGSFGQV) and Lys-333 contribute to the ATP site. Catalysis depends on Asp-432, which acts as the Proton acceptor. Disordered stretches follow at residues 627–697 (DETS…QQQQ), 718–767 (TYSP…INSN), and 785–836 (NIYN…NNNI). A compositionally biased stretch (low complexity) spans 630–697 (SQPPQQQSQQ…QQLQQQQQQQ (68 aa)). Over residues 718-728 (TYSPTTQQSNH) the composition is skewed to polar residues. A compositionally biased stretch (basic and acidic residues) spans 729 to 744 (KLVDQMKKASMKDKSP). The segment covering 785-816 (NIYNNNNNNNNNNNNNNNNNNSNNYNNSNELS) has biased composition (low complexity).

It belongs to the protein kinase superfamily. CMGC Ser/Thr protein kinase family. MNB/DYRK subfamily.

The catalysed reaction is L-seryl-[protein] + ATP = O-phospho-L-seryl-[protein] + ADP + H(+). It carries out the reaction L-threonyl-[protein] + ATP = O-phospho-L-threonyl-[protein] + ADP + H(+). It catalyses the reaction L-tyrosyl-[protein] + ATP = O-phospho-L-tyrosyl-[protein] + ADP + H(+). The protein is Probable serine/threonine-protein kinase dyrk1 (dyrk1) of Dictyostelium discoideum (Social amoeba).